The following is a 104-amino-acid chain: Gastrin (104 aa).

Positions 1-21 (MQRLCAHALILVLALAAFCEA) are cleaved as a signal peptide. The propeptide occupies 22–58 (SWKPHSQLQDAPVAPGANKGQEPLRMDRLGPASHPRR). The disordered stretch occupies residues 26 to 70 (HSQLQDAPVAPGANKGQEPLRMDRLGPASHPRRQLGLQDPPHMVA). The residue at position 87 (Tyr-87) is a Sulfotyrosine. Phe-92 bears the Phenylalanine amide mark. Ser-96 carries the phosphoserine modification. Residues 96–104 (SAEEGDQHP) constitute a propeptide that is removed on maturation.

Belongs to the gastrin/cholecystokinin family. Post-translationally, sulfation enhances proteolytic processing, and blocks peptide degradation. Levels of sulfation differ between proteolytically-cleaved gastrins and between tissues.

It localises to the secreted. In terms of biological role, gastrin stimulates the stomach mucosa to produce and secrete hydrochloric acid and the pancreas to secrete its digestive enzymes. It also stimulates smooth muscle contraction and increases blood circulation and water secretion in the stomach and intestine. In Ovis aries (Sheep), this protein is Gastrin (GAST).